The chain runs to 167 residues: Phospholipase A2 imperatoxin-1 (167 aa).

3 residues coordinate Ca(2+): Trp38, Gly40, and Gly42. 5 cysteine pairs are disulfide-bonded: Cys39-Cys61, Cys60-Cys99, Cys67-Cys92, Cys90-Cys127, and Cys132-Cys144. His64 is a catalytic residue. Asp65 serves as a coordination point for Ca(2+). A glycan (N-linked (GlcNAc...) asparagine) is linked at Asn102. The propeptide occupies 136 to 140 (RRLAR).

The protein belongs to the phospholipase A2 family. Group III subfamily. As to quaternary structure, heterodimer composed of a large subunit and a small subunit; disulfide-linked. Ca(2+) serves as cofactor. In terms of tissue distribution, expressed by the venom gland.

It is found in the secreted. It carries out the reaction a 1,2-diacyl-sn-glycero-3-phosphocholine + H2O = a 1-acyl-sn-glycero-3-phosphocholine + a fatty acid + H(+). Phospholipase toxin, which may catalyze the calcium-dependent hydrolysis of the 2-acyl groups in 3-sn-phosphoglycerides. Inhibits both skeletal (RYR1) and cardiac (RYR2) ryanodine receptors (calcium release channels). Probably blocks ryanodine receptors by generating a lipid product. This chain is Phospholipase A2 imperatoxin-1, found in Pandinus imperator (Emperor scorpion).